We begin with the raw amino-acid sequence, 267 residues long: Cytokinesis defective protein 7 (267 aa).

The interval 244–267 (RNQADQSILPPSGDQQHHRSELHA) is disordered. Basic and acidic residues predominate over residues 258–267 (QQHHRSELHA).

The protein is Cytokinesis defective protein 7 of Caenorhabditis elegans.